Reading from the N-terminus, the 68-residue chain is Small ribosomal subunit protein bS21 (68 aa).

Positions 36 to 68 (YEKPSEKRARERAAAVRRSRKLERKRAERDGIR) are disordered. Residues 37–49 (EKPSEKRARERAA) show a composition bias toward basic and acidic residues. A compositionally biased stretch (basic residues) spans 50–59 (AVRRSRKLER).

Belongs to the bacterial ribosomal protein bS21 family.

In Zymomonas mobilis subsp. mobilis (strain ATCC 31821 / ZM4 / CP4), this protein is Small ribosomal subunit protein bS21.